The chain runs to 299 residues: S-fimbrial protein subunit SfaH (299 aa).

Belongs to the fimbrial protein family.

The protein resides in the fimbrium. In terms of biological role, fimbriae (also called pili), polar filaments radiating from the surface of the bacterium to a length of 0.5-1.5 micrometers and numbering 100-300 per cell, enable bacteria to colonize the epithelium of specific host organs. Its function is as follows. A minor fimbrial subunit. This protein is necessary for full expression of S-specific binding. S-fimbrial adhesins enable pathogenic E.coli causing urinary-tract infections or newborn meningitis to attach to glycoproteins terminating with alpha-sialic acid-(2-3)-beta-Gal. The sequence is that of S-fimbrial protein subunit SfaH (sfaH) from Escherichia coli O6:K15:H31 (strain 536 / UPEC).